A 244-amino-acid chain; its full sequence is DNA repair protein RecO (244 aa).

Belongs to the RecO family.

Its function is as follows. Involved in DNA repair and RecF pathway recombination. This is DNA repair protein RecO from Polynucleobacter necessarius subsp. necessarius (strain STIR1).